The following is a 372-amino-acid chain: NAD(P)H-quinone oxidoreductase subunit 1 (372 aa).

A run of 9 helical transmembrane segments spans residues L27–V47, P65–F85, W97–V117, L128–M148, L176–V196, I204–L224, F254–V274, V308–L328, and F347–P367.

This sequence belongs to the complex I subunit 1 family. NDH-1 is composed of at least 11 different subunits.

It localises to the cellular thylakoid membrane. It catalyses the reaction a plastoquinone + NADH + (n+1) H(+)(in) = a plastoquinol + NAD(+) + n H(+)(out). It carries out the reaction a plastoquinone + NADPH + (n+1) H(+)(in) = a plastoquinol + NADP(+) + n H(+)(out). Its function is as follows. NDH-1 shuttles electrons from an unknown electron donor, via FMN and iron-sulfur (Fe-S) centers, to quinones in the respiratory and/or the photosynthetic chain. The immediate electron acceptor for the enzyme in this species is believed to be plastoquinone. Couples the redox reaction to proton translocation, and thus conserves the redox energy in a proton gradient. The polypeptide is NAD(P)H-quinone oxidoreductase subunit 1 (Thermosynechococcus vestitus (strain NIES-2133 / IAM M-273 / BP-1)).